We begin with the raw amino-acid sequence, 268 residues long: Small ribosomal subunit protein eS1 (268 aa).

This sequence belongs to the eukaryotic ribosomal protein eS1 family. Component of the small ribosomal subunit. Mature ribosomes consist of a small (40S) and a large (60S) subunit. The 40S subunit contains about 33 different proteins and 1 molecule of RNA (18S). The 60S subunit contains about 49 different proteins and 3 molecules of RNA (28S, 5.8S and 5S).

Its subcellular location is the cytoplasm. The polypeptide is Small ribosomal subunit protein eS1 (Artemia franciscana (Brine shrimp)).